The primary structure comprises 135 residues: Cilia- and flagella-associated protein 144 (135 aa).

Residues 76–100 (QGPKKKYSETQTEAQEIGWDPNPLI) form a disordered region.

Belongs to the CFAP144 family. In terms of assembly, microtubule inner protein component of sperm flagellar doublet microtubules. In terms of tissue distribution, predominantly expressed in tissues containing motile cilia.

It localises to the cytoplasm. The protein resides in the cytoskeleton. It is found in the cilium axoneme. Its subcellular location is the flagellum axoneme. The polypeptide is Cilia- and flagella-associated protein 144 (Mus musculus (Mouse)).